A 635-amino-acid chain; its full sequence is Ligand-gated ion channel 4 (635 aa).

A signal peptide spans 1–24 (MIICYSCLTVSILLTIKFVPCRFA). The Extracellular segment spans residues 25 to 324 (GIEHQNTKSR…IHMHRRPLFY (300 aa)). 4 N-linked (GlcNAc...) asparagine glycosylation sites follow: asparagine 46, asparagine 139, asparagine 177, and asparagine 225. Cysteine 238 and cysteine 252 form a disulfide bridge. Asparagine 282 carries N-linked (GlcNAc...) asparagine glycosylation. Helical transmembrane passes span 325 to 345 (VFNH…GFLM), 355 to 375 (MIIT…ESIP), and 381 to 401 (VPLI…ATCV). Residues 402 to 599 (NVITLNMHRN…QQLASVVDRL (198 aa)) lie on the Cytoplasmic side of the membrane. A helical membrane pass occupies residues 600-620 (LLCLFCTATLFTIICLLIVPV). N-linked (GlcNAc...) asparagine glycosylation is present at asparagine 625.

The protein belongs to the ligand-gated ion channel (TC 1.A.9) family.

The protein localises to the postsynaptic cell membrane. It is found in the cell membrane. Its function is as follows. Possible acetylcholine receptor. The chain is Ligand-gated ion channel 4 (lgc-4) from Caenorhabditis elegans.